The chain runs to 265 residues: Protein HesA, vegetative (265 aa).

Belongs to the HesA/MoeB/ThiF family.

This is Protein HesA, vegetative (hesA2) from Trichormus variabilis (strain ATCC 29413 / PCC 7937) (Anabaena variabilis).